The chain runs to 181 residues: Major urinary protein (181 aa).

Residues 1–19 (MKLLLLLLCLGLTLVCGHA) form the signal peptide. Asn54 carries N-linked (GlcNAc...) asparagine glycosylation. Cys83 and Cys176 are disulfide-bonded.

This sequence belongs to the calycin superfamily. Lipocalin family. In terms of tissue distribution, abundant in the urine of adult male rats but absent from that of females.

It is found in the cytoplasm. It localises to the cytosol. The protein localises to the secreted. Major urinary proteins (Mups) bind and release pheromones. They may also protect pheromones from oxidation. In this context, they play a role in the regulation of social behaviors, such as aggression, mating, pup-suckling, territory establishment and dominance. Acts as a kairomone, detected by the prey vomeronasal organ and inducing fear reactions in mice. This chain is Major urinary protein, found in Rattus norvegicus (Rat).